The chain runs to 225 residues: MGIKDWPDGEGPREKLLKLGVGPLSDAELLAVVLRNGVQGLSAVELARNLIGQFGGLRELLTASEIEVCRMPGMGPVKFAQLQAAAELSKRISQQNLKRGKILSDPDLTRDYLMRQLADRAYEVFAILLLDSQHRVIQFVELFRGTIDSASVYPRDVVCLVLEKKAAAVIVCHNHPSGVAEPSLADRRITERLKFALETIDVSLLDHMVVGDREIVSFAERGWID.

The region spanning 102-224 is the MPN domain; that stretch reads ILSDPDLTRD…IVSFAERGWI (123 aa). The Zn(2+) site is built by His-173, His-175, and Asp-186. A JAMM motif motif is present at residues 173-186; it reads HNHPSGVAEPSLAD.

The protein belongs to the UPF0758 family.

In Shewanella sediminis (strain HAW-EB3), this protein is UPF0758 protein Ssed_0385.